The primary structure comprises 176 residues: UBA-like domain-containing protein 1 (176 aa).

2 stretches are compositionally biased toward low complexity: residues Glu-88–Thr-105 and Thr-120–Gln-137. Positions Glu-88 to Arg-176 are disordered. Positions Pro-138–Pro-150 are enriched in pro residues. The span at Pro-166–Arg-176 shows a compositional bias: basic and acidic residues.

Belongs to the UBALD family.

This Rattus norvegicus (Rat) protein is UBA-like domain-containing protein 1 (Ubald1).